We begin with the raw amino-acid sequence, 384 residues long: NADH-ubiquinone oxidoreductase chain 5 (384 aa).

12 helical membrane-spanning segments follow: residues Phe-12–Met-32, Ile-50–Ile-70, Ile-92–Ile-112, Ser-113–Gln-133, Val-153–Tyr-173, Met-183–Phe-203, Thr-215–Ile-235, Trp-244–Gly-264, Ile-274–Gly-293, Ala-298–Ile-320, Cys-343–Tyr-363, and Ser-364–Leu-384.

This sequence belongs to the complex I subunit 5 family.

The protein localises to the mitochondrion inner membrane. The catalysed reaction is a ubiquinone + NADH + 5 H(+)(in) = a ubiquinol + NAD(+) + 4 H(+)(out). Functionally, core subunit of the mitochondrial membrane respiratory chain NADH dehydrogenase (Complex I) that is believed to belong to the minimal assembly required for catalysis. Complex I functions in the transfer of electrons from NADH to the respiratory chain. The immediate electron acceptor for the enzyme is believed to be ubiquinone. The polypeptide is NADH-ubiquinone oxidoreductase chain 5 (ND5) (Anopheles arabiensis (Mosquito)).